The following is a 278-amino-acid chain: Large ribosomal subunit protein uL2 (278 aa).

Residues 224–278 (VAMNPVDHPHGGGEGRTSGGRNPVTPWGVPTKGKKTRSNKRTDTFILSSRHNRKK) form a disordered region.

The protein belongs to the universal ribosomal protein uL2 family. As to quaternary structure, part of the 50S ribosomal subunit. Forms a bridge to the 30S subunit in the 70S ribosome.

Its function is as follows. One of the primary rRNA binding proteins. Required for association of the 30S and 50S subunits to form the 70S ribosome, for tRNA binding and peptide bond formation. It has been suggested to have peptidyltransferase activity; this is somewhat controversial. Makes several contacts with the 16S rRNA in the 70S ribosome. This is Large ribosomal subunit protein uL2 from Methylorubrum extorquens (strain CM4 / NCIMB 13688) (Methylobacterium extorquens).